A 118-amino-acid chain; its full sequence is Large ribosomal subunit protein bL20 (118 aa).

Belongs to the bacterial ribosomal protein bL20 family.

Its function is as follows. Binds directly to 23S ribosomal RNA and is necessary for the in vitro assembly process of the 50S ribosomal subunit. It is not involved in the protein synthesizing functions of that subunit. This is Large ribosomal subunit protein bL20 from Psychromonas ingrahamii (strain DSM 17664 / CCUG 51855 / 37).